The following is a 331-amino-acid chain: NADH-cytochrome b5 reductase 2 (331 aa).

A helical membrane pass occupies residues Val36–Gly56. The FAD-binding FR-type domain occupies Lys80–Ser185. Position 188–223 (Lys188–Leu223) interacts with FAD.

Belongs to the flavoprotein pyridine nucleotide cytochrome reductase family. It depends on FAD as a cofactor.

The protein resides in the mitochondrion outer membrane. It carries out the reaction 2 Fe(III)-[cytochrome b5] + NADH = 2 Fe(II)-[cytochrome b5] + NAD(+) + H(+). Functionally, may mediate the reduction of outer membrane cytochrome b5. This chain is NADH-cytochrome b5 reductase 2 (MCR1), found in Pyricularia oryzae (strain 70-15 / ATCC MYA-4617 / FGSC 8958) (Rice blast fungus).